Reading from the N-terminus, the 824-residue chain is 4-methylaminobutanoate oxidase (formaldehyde-forming) (824 aa).

The residue at position 67 (H67) is a Pros-8alpha-FAD histidine.

Belongs to the GcvT family. FAD is required as a cofactor.

The enzyme catalyses 4-(methylamino)butanoate + O2 + H2O = 4-aminobutanoate + formaldehyde + H2O2. The protein operates within alkaloid degradation; nicotine degradation. Its function is as follows. Catalyzes the oxidative demethylation of 4-methylaminobutanoate produced from the pyrrolidine ring of nicotine. To a much lesser extent, can also use sarcosine as substrate, but is not active against dimethylglycine, methylaminopropionitrile, methylaminopropylamine, and alpha-methylaminobutanoate. This Paenarthrobacter nicotinovorans (Arthrobacter nicotinovorans) protein is 4-methylaminobutanoate oxidase (formaldehyde-forming) (abo).